We begin with the raw amino-acid sequence, 67 residues long: Large ribosomal subunit protein eL24 (67 aa).

Zn(2+) contacts are provided by Cys-7, Cys-10, Cys-33, and Cys-37. The C4-type zinc-finger motif lies at Cys-7–Cys-37.

This sequence belongs to the eukaryotic ribosomal protein eL24 family. In terms of assembly, part of the 50S ribosomal subunit. Forms a cluster with proteins L3 and L14. It depends on Zn(2+) as a cofactor.

Its function is as follows. Binds to the 23S rRNA. This chain is Large ribosomal subunit protein eL24, found in Pyrococcus abyssi (strain GE5 / Orsay).